Consider the following 50-residue polypeptide: Photosystem II reaction center protein M (50 aa).

The helical transmembrane segment at glycine 7–isoleucine 27 threads the bilayer.

Belongs to the PsbM family. PSII is composed of 1 copy each of membrane proteins PsbA, PsbB, PsbC, PsbD, PsbE, PsbF, PsbH, PsbI, PsbJ, PsbK, PsbL, PsbM, PsbT, PsbX, PsbY, Psb30/Ycf12, peripheral proteins PsbO, CyanoQ (PsbQ), PsbU, PsbV and a large number of cofactors. It forms dimeric complexes.

Its subcellular location is the cellular thylakoid membrane. One of the components of the core complex of photosystem II (PSII). PSII is a light-driven water:plastoquinone oxidoreductase that uses light energy to abstract electrons from H(2)O, generating O(2) and a proton gradient subsequently used for ATP formation. It consists of a core antenna complex that captures photons, and an electron transfer chain that converts photonic excitation into a charge separation. This subunit is found at the monomer-monomer interface. The polypeptide is Photosystem II reaction center protein M (Prochlorococcus marinus (strain MIT 9301)).